The sequence spans 2130 residues: Highly reducing polyketide synthase anuA (2130 aa).

Residues 1 to 213 (MKAGVLSGTS…GANCHVILEQ (213 aa)) enclose the Ketosynthase family 3 (KS3) domain. The 328-residue stretch at 317 to 644 (FVFTGQGSQW…SFAGNLWLKG (328 aa)) folds into the Malonyl-CoA:ACP transacylase (MAT) domain. Positions 701 to 836 (HELLGSLLTG…GSIAIHPRNA (136 aa)) are N-terminal hotdog fold. Positions 701–1000 (HELLGSLLTG…LSPYQSTSQA (300 aa)) constitute a PKS/mFAS DH domain. His-733 (proton acceptor; for dehydratase activity) is an active-site residue. The segment at 849–1000 (LESTAKRTWY…LSPYQSTSQA (152 aa)) is C-terminal hotdog fold. Catalysis depends on Asp-914, which acts as the Proton donor; for dehydratase activity. Residues 1405–1722 (GQLDTIYFQQ…SRSRIGKVAI (318 aa)) form the Enoyl reductase (ER) domain. In terms of domain architecture, Ketoreductase (KR) spans 1747–1927 (SYVMVGCLGG…AVAVGLGMIS (181 aa)). The region spanning 2047 to 2125 (TLDEAVLDHI…SLRDLAMTSL (79 aa)) is the Carrier domain. Ser-2084 carries the post-translational modification O-(pantetheine 4'-phosphoryl)serine.

Pantetheine 4'-phosphate serves as cofactor.

It participates in secondary metabolite biosynthesis. Highly reducing polyketide synthase; part of the gene cluster that mediates the biosynthesis of annullatin D, an alkylated aromatic polyketide with a fused dihydrobenzofuran lactone ring system that exhibits potent agonistic activities toward the cannabinoid receptors. The annullatin backbone 2-hydroxymethyl-3-pentylphenol is assembled from one acetyl-CoA starter unit and 5 malonyl-CoA elongation units by cooperation of the highly reducing polyketide synthase anuA, the short-chain dehydrogenase anuB and the oxidoreductase anuC, before being hydroxylated at the C-5 alkyl chain by the cytochrome P450 monooxygenase anuE to form (8S)-annullatin E. The prenyltransferase anuH subsequently installs one isoprenyl group at the benzene ring to form (8S)-annullatin J. Enzymatic or nonenzymatic dihydro-benzofuran ring formation between the prenyl and the phenolic hydroxyl groups in (8S)-annullatin J results in two diastereomers (2S,9S)-annullatin H and compound 12. The intermediate (2S,9S)-annullatin H is then converted to (2S,9S)-annullatin D by the FAD-linked oxidoreductase anuG-catalyzed five-member lactone ring formation. The isomer 12 acts as a substrate for the short-chain dehydrogenase anuF and is oxidized to (2R)-annullatin F, which is subsequently acetylated by an acetyltransferase leading to (2R)-annullatin G formation. The remaining enzymes identified within the cluster, anuD, anuI and anuJ, seem not to be involved in annullatin biosynthesis. In Penicillium roqueforti (strain FM164), this protein is Highly reducing polyketide synthase anuA.